Here is a 544-residue protein sequence, read N- to C-terminus: Putative cysteine ligase BshC (544 aa).

Residues 431–463 (LNDTCRTIKEEHEKFIQELSRLDEKIYDFEEKN) adopt a coiled-coil conformation.

This sequence belongs to the BshC family.

Functionally, involved in bacillithiol (BSH) biosynthesis. May catalyze the last step of the pathway, the addition of cysteine to glucosamine malate (GlcN-Mal) to generate BSH. The protein is Putative cysteine ligase BshC of Natranaerobius thermophilus (strain ATCC BAA-1301 / DSM 18059 / JW/NM-WN-LF).